We begin with the raw amino-acid sequence, 76 residues long: Translational regulator CsrA (76 aa).

This sequence belongs to the CsrA/RsmA family. As to quaternary structure, homodimer; the beta-strands of each monomer intercalate to form a hydrophobic core, while the alpha-helices form wings that extend away from the core.

The protein localises to the cytoplasm. A translational regulator that binds mRNA to regulate translation initiation and/or mRNA stability. Usually binds in the 5'-UTR at or near the Shine-Dalgarno sequence preventing ribosome-binding, thus repressing translation. Its main target seems to be the major flagellin gene, while its function is anatagonized by FliW. The polypeptide is Translational regulator CsrA (Helicobacter pylori (strain J99 / ATCC 700824) (Campylobacter pylori J99)).